The chain runs to 308 residues: Elongation factor Ts (308 aa).

Residues 80 to 83 (TDFV) form an involved in Mg(2+) ion dislocation from EF-Tu region.

This sequence belongs to the EF-Ts family.

Its subcellular location is the cytoplasm. Its function is as follows. Associates with the EF-Tu.GDP complex and induces the exchange of GDP to GTP. It remains bound to the aminoacyl-tRNA.EF-Tu.GTP complex up to the GTP hydrolysis stage on the ribosome. The chain is Elongation factor Ts from Rhodopseudomonas palustris (strain BisB18).